Reading from the N-terminus, the 104-residue chain is Cell division protein FtsB (104 aa).

At 1–3 the chain is on the cytoplasmic side; the sequence is MGK. A helical transmembrane segment spans residues 4-21; the sequence is LTLLLLVLLGWLQYSLWL. Residues 22–104 lie on the Periplasmic side of the membrane; sequence GKNGIHDYTR…NAQQGRPASQ (83 aa). Residues 33 to 62 are a coiled coil; that stretch reads DEDVASQQGNNAKLKARNDRLFAEIDDLNG.

It belongs to the FtsB family. Part of a complex composed of FtsB, FtsL and FtsQ.

The protein resides in the cell inner membrane. Its function is as follows. Essential cell division protein. May link together the upstream cell division proteins, which are predominantly cytoplasmic, with the downstream cell division proteins, which are predominantly periplasmic. The polypeptide is Cell division protein FtsB (Erwinia tasmaniensis (strain DSM 17950 / CFBP 7177 / CIP 109463 / NCPPB 4357 / Et1/99)).